The sequence spans 231 residues: Ribose-5-phosphate isomerase A (231 aa).

Substrate-binding positions include 32–35 (TGST), 85–88 (DGAD), and 98–101 (KGGG). The Proton acceptor role is filled by Glu107. Lys125 contacts substrate.

The protein belongs to the ribose 5-phosphate isomerase family. In terms of assembly, homodimer.

It catalyses the reaction aldehydo-D-ribose 5-phosphate = D-ribulose 5-phosphate. It participates in carbohydrate degradation; pentose phosphate pathway; D-ribose 5-phosphate from D-ribulose 5-phosphate (non-oxidative stage): step 1/1. Functionally, catalyzes the reversible conversion of ribose-5-phosphate to ribulose 5-phosphate. The sequence is that of Ribose-5-phosphate isomerase A from Paraburkholderia xenovorans (strain LB400).